The sequence spans 304 residues: tRNA dimethylallyltransferase (304 aa).

16–23 lines the ATP pocket; it reads GPTASGKS. 18–23 provides a ligand contact to substrate; that stretch reads TASGKS. Interaction with substrate tRNA stretches follow at residues 41–44 and 165–169; these read DSMQ and QRIIR.

It belongs to the IPP transferase family. In terms of assembly, monomer. It depends on Mg(2+) as a cofactor.

The enzyme catalyses adenosine(37) in tRNA + dimethylallyl diphosphate = N(6)-dimethylallyladenosine(37) in tRNA + diphosphate. In terms of biological role, catalyzes the transfer of a dimethylallyl group onto the adenine at position 37 in tRNAs that read codons beginning with uridine, leading to the formation of N6-(dimethylallyl)adenosine (i(6)A). The sequence is that of tRNA dimethylallyltransferase from Allorhizobium ampelinum (strain ATCC BAA-846 / DSM 112012 / S4) (Agrobacterium vitis (strain S4)).